Here is a 330-residue protein sequence, read N- to C-terminus: CRISPR-associated endonuclease Cas1 (330 aa).

Mn(2+) contacts are provided by E154, H222, and E237.

The protein belongs to the CRISPR-associated endonuclease Cas1 family. In terms of assembly, homodimer, forms a heterotetramer with a Cas2 homodimer. Requires Mg(2+) as cofactor. Mn(2+) serves as cofactor.

Functionally, CRISPR (clustered regularly interspaced short palindromic repeat), is an adaptive immune system that provides protection against mobile genetic elements (viruses, transposable elements and conjugative plasmids). CRISPR clusters contain spacers, sequences complementary to antecedent mobile elements, and target invading nucleic acids. CRISPR clusters are transcribed and processed into CRISPR RNA (crRNA). Acts as a dsDNA endonuclease. Involved in the integration of spacer DNA into the CRISPR cassette. This chain is CRISPR-associated endonuclease Cas1, found in Clostridium perfringens (strain SM101 / Type A).